The sequence spans 327 residues: Mitochondrial carnitine carrier (327 aa).

Residues 1 to 11 show a composition bias toward low complexity; that stretch reads MSSDTSLSESS. A disordered region spans residues 1-29; it reads MSSDTSLSESSLLKEESGSLTKSRPPIKS. The next 6 helical transmembrane spans lie at 33-49, 107-123, 141-162, 196-212, 244-260, and 293-313; these read RENI…GVCA, LGVT…YDVG, MGQM…TAPT, GSLA…ALYF, LAGG…VFPI, and FFPG…ATFL. Solcar repeat units follow at residues 33–126, 139–221, and 237–321; these read RENI…GKKL, LTMG…SKNY, and VNIL…THSL.

Belongs to the mitochondrial carrier (TC 2.A.29) family.

The protein localises to the mitochondrion inner membrane. In terms of biological role, transports carnitine, acetylcarnitine, propionylcarnitine and to a much lower extent medium- and long-chain acylcarnitines. The polypeptide is Mitochondrial carnitine carrier (CRC1) (Saccharomyces cerevisiae (strain ATCC 204508 / S288c) (Baker's yeast)).